The following is a 612-amino-acid chain: Poly(A) RNA polymerase, mitochondrial (612 aa).

Residues methionine 1–glutamine 57 constitute a mitochondrion transit peptide. ATP-binding positions include tyrosine 83 to glutamate 89 and glycine 228 to cysteine 229. The Mg(2+) site is built by aspartate 230 and aspartate 232. The 37-residue stretch at serine 427–serine 463 folds into the PAP-associated domain. Disordered stretches follow at residues alanine 555–serine 574 and serine 588–arginine 612.

It belongs to the DNA polymerase type-B-like family. The cofactor is Mg(2+). Mn(2+) is required as a cofactor.

It is found in the mitochondrion. The enzyme catalyses RNA(n) + ATP = RNA(n)-3'-adenine ribonucleotide + diphosphate. Functionally, polymerase that creates the 3' poly(A) tail of mitochondrial transcripts. This is not required for transcript stability or translation but may maintain mRNA integrity by protecting 3' termini from degradation. This is Poly(A) RNA polymerase, mitochondrial from Drosophila melanogaster (Fruit fly).